Here is a 638-residue protein sequence, read N- to C-terminus: Paramyosin (638 aa).

A coiled-coil region spans residues 1-638 (FSPSTTRLES…EGDISVMQAD (638 aa)).

The protein belongs to the paramyosin family. In terms of assembly, homodimer.

The protein resides in the cytoplasm. It is found in the myofibril. Functionally, paramyosin is a major structural component of many thick filaments isolated from invertebrate muscles. The protein is Paramyosin of Opisthorchis felineus.